The chain runs to 310 residues: Acetyl-coenzyme A carboxylase carboxyl transferase subunit alpha (310 aa).

The CoA carboxyltransferase C-terminal domain occupies asparagine 36–glutamate 286.

The protein belongs to the AccA family. In terms of assembly, acetyl-CoA carboxylase is a heterohexamer composed of biotin carboxyl carrier protein (AccB), biotin carboxylase (AccC) and two subunits each of ACCase subunit alpha (AccA) and ACCase subunit beta (AccD).

It localises to the cytoplasm. It carries out the reaction N(6)-carboxybiotinyl-L-lysyl-[protein] + acetyl-CoA = N(6)-biotinyl-L-lysyl-[protein] + malonyl-CoA. The protein operates within lipid metabolism; malonyl-CoA biosynthesis; malonyl-CoA from acetyl-CoA: step 1/1. Component of the acetyl coenzyme A carboxylase (ACC) complex. First, biotin carboxylase catalyzes the carboxylation of biotin on its carrier protein (BCCP) and then the CO(2) group is transferred by the carboxyltransferase to acetyl-CoA to form malonyl-CoA. In Campylobacter fetus subsp. fetus (strain 82-40), this protein is Acetyl-coenzyme A carboxylase carboxyl transferase subunit alpha.